Consider the following 212-residue polypeptide: Mediator of RNA polymerase II transcription subunit 20 (212 aa).

The protein belongs to the Mediator complex subunit 20 family. Component of the Mediator complex, which is composed of MED1, MED4, MED6, MED7, MED8, MED9, MED10, MED11, MED12, MED13, MED13L, MED14, MED15, MED16, MED17, MED18, MED19, MED20, MED21, MED22, MED23, MED24, MED25, MED26, MED27, MED29, MED30, MED31, CCNC, CDK8 and CDC2L6/CDK11. The MED12, MED13, CCNC and CDK8 subunits form a distinct module termed the CDK8 module. Mediator containing the CDK8 module is less active than Mediator lacking this module in supporting transcriptional activation. Individual preparations of the Mediator complex lacking one or more distinct subunits have been variously termed ARC, CRSP, DRIP, PC2, SMCC and TRAP. Interacts with PPARG.

It is found in the nucleus. Component of the Mediator complex, a coactivator involved in the regulated transcription of nearly all RNA polymerase II-dependent genes. Mediator functions as a bridge to convey information from gene-specific regulatory proteins to the basal RNA polymerase II transcription machinery. Mediator is recruited to promoters by direct interactions with regulatory proteins and serves as a scaffold for the assembly of a functional preinitiation complex with RNA polymerase II and the general transcription factors. This Mus musculus (Mouse) protein is Mediator of RNA polymerase II transcription subunit 20 (Med20).